A 31-amino-acid chain; its full sequence is Cycloviolacin-O6 (31 aa).

Residues 1-31 (GTLPCGESCVWIPCISAAVGCSCKSKVCYKN) constitute a cross-link (cyclopeptide (Gly-Asn)). 3 disulfides stabilise this stretch: cysteine 5–cysteine 21, cysteine 9–cysteine 23, and cysteine 14–cysteine 28.

Post-translationally, this is a cyclic peptide.

Its function is as follows. Probably participates in a plant defense mechanism. The sequence is that of Cycloviolacin-O6 from Viola odorata (Sweet violet).